The following is a 404-amino-acid chain: MEGKGVLEGRYEMGRVLGHGNFGRVHAARDVRTGRAVAMKVVSKDKVERAGMAEQIKREIAVMKMVSHPSVVELHEVMATRTKVYLALELVRGGELFDRIARHGRVGEGVARRYFRQLVSAVDFCHGRGVYHRDLKPENLLLDEAGNLKVADFGLSALACHARPDGLLHTACGTPAYVAPEVLAGNGYDGAKADLWSCGVILYVLLAGALPFQDDNLVCMYRKMRRGDFCCPPWVTTDARKLIKSLLDPNPGTRITVAGLLETPWFRKTAPVPRPIIADPAAAPVDTRGNAGDDKDEPPEVLNAFHLISLSEGFDLSPLFEHDPAASPGRATARAGGTRFATREAASGVVARLEALAMGGARVAPSLLMVDVKKDGGDAMEYRPFFSEELRPALKDIVWSPAAT.

The Protein kinase domain maps to 11–266 (YEMGRVLGHG…VAGLLETPWF (256 aa)). ATP contacts are provided by residues 17–25 (LGHGNFGRV) and Lys-40. Asp-134 serves as the catalytic Proton acceptor. The interval 152-181 (DFGLSALACHARPDGLLHTACGTPAYVAPE) is activation loop. Residues 294 to 321 (DKDEPPEVLNAFHLISLSEGFDLSPLFE) enclose the NAF domain. Residues 335 to 356 (AGGTRFATREAASGVVARLEAL) are PPI.

Belongs to the protein kinase superfamily. CAMK Ser/Thr protein kinase family. SNF1 subfamily. Mn(2+) is required as a cofactor.

It carries out the reaction L-seryl-[protein] + ATP = O-phospho-L-seryl-[protein] + ADP + H(+). The enzyme catalyses L-threonyl-[protein] + ATP = O-phospho-L-threonyl-[protein] + ADP + H(+). Its function is as follows. CIPK serine-threonine protein kinases interact with CBL proteins. Binding of a CBL protein to the regulatory NAF domain of CIPK protein lead to the activation of the kinase in a calcium-dependent manner. In Oryza sativa subsp. japonica (Rice), this protein is Putative CBL-interacting protein kinase 27 (CIPK27).